Reading from the N-terminus, the 326-residue chain is Cobalamin biosynthesis protein CobD (326 aa).

4 helical membrane passes run 58–78 (MRGV…GVVL), 81–101 (LFDV…AVFL), 157–177 (FSDG…PGLL), and 304–324 (VFYR…LPFL).

The protein belongs to the CobD/CbiB family.

It is found in the cell membrane. It participates in cofactor biosynthesis; adenosylcobalamin biosynthesis. In terms of biological role, converts cobyric acid to cobinamide by the addition of aminopropanol on the F carboxylic group. The chain is Cobalamin biosynthesis protein CobD from Sinorhizobium fredii (strain NBRC 101917 / NGR234).